A 339-amino-acid polypeptide reads, in one-letter code: Glycerol-3-phosphate dehydrogenase [NAD(P)+] (339 aa).

Residues Ser15, Trp16, His36, and Lys110 each coordinate NADPH. Lys110, Gly144, and Ser146 together coordinate sn-glycerol 3-phosphate. Ala148 is an NADPH binding site. 5 residues coordinate sn-glycerol 3-phosphate: Lys199, Asp252, Ser262, Arg263, and Asn264. Lys199 acts as the Proton acceptor in catalysis. An NADPH-binding site is contributed by Arg263. Residues Val287 and Glu289 each coordinate NADPH.

Belongs to the NAD-dependent glycerol-3-phosphate dehydrogenase family.

It localises to the cytoplasm. It catalyses the reaction sn-glycerol 3-phosphate + NAD(+) = dihydroxyacetone phosphate + NADH + H(+). The enzyme catalyses sn-glycerol 3-phosphate + NADP(+) = dihydroxyacetone phosphate + NADPH + H(+). It participates in membrane lipid metabolism; glycerophospholipid metabolism. Catalyzes the reduction of the glycolytic intermediate dihydroxyacetone phosphate (DHAP) to sn-glycerol 3-phosphate (G3P), the key precursor for phospholipid synthesis. This Desulfotalea psychrophila (strain LSv54 / DSM 12343) protein is Glycerol-3-phosphate dehydrogenase [NAD(P)+].